The sequence spans 476 residues: RuvB-like 1 (476 aa).

The tract at residues 1–23 (MDMEVDEAISGTSSSRLAPIEEV) is disordered. Position 89 to 96 (89 to 96 (GPPATGKT)) interacts with ATP.

This sequence belongs to the RuvB family. As to quaternary structure, forms homohexameric rings. May form a dodecamer with ruvb-2 made of two stacked hexameric rings. As to expression, expressed in gonadal cells.

The protein localises to the cytoplasm. The protein resides in the nucleus. It catalyses the reaction ATP + H2O = ADP + phosphate + H(+). In terms of biological role, possesses single-stranded DNA-stimulated ATPase and ATP dependent DNA helicase (3' to 5') activity suggesting a role in nuclear processes such as recombination and transcription. May participate in several chromatin remodeling complexes that mediate the ATP-dependent exchange of histones and remodel chromatin by shifting nucleosomes. Involvement in these complexes is likely required for transcriptional activation of selected genes and DNA repair in response to DNA damage. Involved in the Ce-Tor signaling pathway whereby it is required for the accumulation and localization of box C/D snoRNP to nucleoli to regulate ribosomal maturation and thus protein synthesis. Antagonizes the transcriptional activity of transcription factor pha-4, to control postembryonic development and adult longevity. Has a role in pharyngeal development. Has a role in gonadal development. This is RuvB-like 1 from Caenorhabditis elegans.